Reading from the N-terminus, the 209-residue chain is Abscisic acid receptor PYL3 (209 aa).

A disordered region spans residues 1–23; sequence MNLAPIHDPSSSSTTTTSSSTPY. Low complexity predominate over residues 10-21; it reads SSSSTTTTSSST. The START-like stretch occupies residues 43 to 205; that stretch reads FPRSPNTCTS…NLQNLAVIST (163 aa). Residues lysine 79, 113-118, 140-146, and glutamate 170 each bind abscisate; these read ASTSVE and RLNNYRS. The Gate loop signature appears at 109-113; the sequence is SGLPA. Positions 139 to 141 match the Latch loop motif; sequence HRL.

This sequence belongs to the PYR/PYL/RCAR abscisic acid intracellular receptor family. Homodimer and monomer. Binds ABA on one subunit only. ABA-binding favors monomer and trans-homodimer intermediate, and increases PP2C inhibitor activity. Binds both (-)-ABA and (+)-ABA. Binds to CARs protein in an ABA-independent manner, both at the plasma membrane and in the nucleus. Interacts with HAB1, ABI1 and ABI2, and possibly with other PP2Cs.

The protein localises to the cytoplasm. The protein resides in the nucleus. It is found in the cell membrane. Its function is as follows. Receptor for abscisic acid (ABA) required for ABA-mediated responses such as stomatal closure and germination inhibition. Inhibits the activity of group-A protein phosphatases type 2C (PP2Cs) when activated by ABA. Can be activated by both (-)-ABA and (+)-ABA. In Arabidopsis thaliana (Mouse-ear cress), this protein is Abscisic acid receptor PYL3 (PYL3).